The sequence spans 434 residues: Nicotinate phosphoribosyltransferase (434 aa).

Residue H242 is modified to Phosphohistidine; by autocatalysis.

It belongs to the NAPRTase family. Post-translationally, transiently phosphorylated on a His residue during the reaction cycle. Phosphorylation strongly increases the affinity for substrates and increases the rate of nicotinate D-ribonucleotide production. Dephosphorylation regenerates the low-affinity form of the enzyme, leading to product release.

It catalyses the reaction nicotinate + 5-phospho-alpha-D-ribose 1-diphosphate + ATP + H2O = nicotinate beta-D-ribonucleotide + ADP + phosphate + diphosphate. Its pathway is cofactor biosynthesis; NAD(+) biosynthesis; nicotinate D-ribonucleotide from nicotinate: step 1/1. Its function is as follows. Catalyzes the synthesis of beta-nicotinate D-ribonucleotide from nicotinate and 5-phospho-D-ribose 1-phosphate at the expense of ATP. This is Nicotinate phosphoribosyltransferase from Rhizobium leguminosarum bv. trifolii (strain WSM2304).